We begin with the raw amino-acid sequence, 156 residues long: Small ribosomal subunit protein uS7 (156 aa).

Belongs to the universal ribosomal protein uS7 family. In terms of assembly, part of the 30S ribosomal subunit. Contacts proteins S9 and S11.

In terms of biological role, one of the primary rRNA binding proteins, it binds directly to 16S rRNA where it nucleates assembly of the head domain of the 30S subunit. Is located at the subunit interface close to the decoding center, probably blocks exit of the E-site tRNA. The sequence is that of Small ribosomal subunit protein uS7 from Rippkaea orientalis (strain PCC 8801 / RF-1) (Cyanothece sp. (strain PCC 8801)).